A 367-amino-acid chain; its full sequence is tRNA-specific 2-thiouridylase MnmA (367 aa).

ATP is bound by residues 13–20 (GLSGGVDS) and Met39. An interaction with target base in tRNA region spans residues 99–101 (NPD). Cys104 functions as the Nucleophile in the catalytic mechanism. Residues Cys104 and Cys200 are joined by a disulfide bond. Gly128 lines the ATP pocket. Residues 150-152 (KDQ) are interaction with tRNA. Residue Cys200 is the Cysteine persulfide intermediate of the active site. An interaction with tRNA region spans residues 307–308 (RY).

It belongs to the MnmA/TRMU family.

The protein resides in the cytoplasm. It carries out the reaction S-sulfanyl-L-cysteinyl-[protein] + uridine(34) in tRNA + AH2 + ATP = 2-thiouridine(34) in tRNA + L-cysteinyl-[protein] + A + AMP + diphosphate + H(+). In terms of biological role, catalyzes the 2-thiolation of uridine at the wobble position (U34) of tRNA, leading to the formation of s(2)U34. The sequence is that of tRNA-specific 2-thiouridylase MnmA from Neisseria gonorrhoeae (strain ATCC 700825 / FA 1090).